The following is a 368-amino-acid chain: Mitogen-activated protein kinase 7 (368 aa).

The region spanning 32–319 is the Protein kinase domain; that stretch reads YVPIKPIGRG…VTDALLHPYM (288 aa). Residues 38 to 46 and lysine 61 each bind ATP; that span reads IGRGAYGVV. Aspartate 158 serves as the catalytic Proton acceptor. Position 191 is a phosphothreonine (threonine 191). The short motif at 191–193 is the TXY element; it reads TEY. Tyrosine 193 bears the Phosphotyrosine mark. Threonine 196 carries the post-translational modification Phosphothreonine.

This sequence belongs to the protein kinase superfamily. CMGC Ser/Thr protein kinase family. MAP kinase subfamily. Interacts with MKK3. Mg(2+) serves as cofactor. Dually phosphorylated on Thr-191 and Tyr-193, which activates the enzyme.

It carries out the reaction L-seryl-[protein] + ATP = O-phospho-L-seryl-[protein] + ADP + H(+). The enzyme catalyses L-threonyl-[protein] + ATP = O-phospho-L-threonyl-[protein] + ADP + H(+). Its activity is regulated as follows. Activated by threonine and tyrosine phosphorylation. Activated in response to hydrogen peroxide. Activation is triggered by MAPKKK17 and MAPKKK18 in a MKK3-dependent manner. In terms of biological role, MKK3-MPK7 module acts as a positive regulator of PR1 gene expression. The sequence is that of Mitogen-activated protein kinase 7 (MPK7) from Arabidopsis thaliana (Mouse-ear cress).